Here is a 1257-residue protein sequence, read N- to C-terminus: LIM domain kinase 1 (1257 aa).

The disordered stretch occupies residues 1 to 24 (MHHQQRLRANGGRGGTGLGAGSGP). Positions 1–147 (MHHQQRLRAN…ERSKLYCGQC (147 aa)) are interaction with LATS1. Positions 11–24 (GGRGGTGLGAGSGP) are enriched in gly residues. LIM zinc-binding domains follow at residues 31 to 93 (PLCA…RFGD) and 94 to 154 (ACQQ…RSCQ). One can recognise a PDZ domain in the interval 174 to 274 (LVEIPKDATP…MLQLTVEHDP (101 aa)). A Protein kinase domain is found at 401 to 686 (LVIGEKLGEG…PCFETLHVWL (286 aa)). ATP-binding positions include 407-415 (LGEGFFGKV) and K430. Residue D522 is part of the active site. Disordered regions lie at residues 552-587 (LPSG…RQRR), 759-811 (QDIP…ERAL), and 881-900 (EELL…QHHR). Residues 794–811 (QEERRNLTPDTESKERAL) are compositionally biased toward basic and acidic residues. Phosphoserine is present on S1000. 3 disordered regions span residues 1010–1037 (AKQL…NPPL), 1085–1182 (SAQQ…EKVH), and 1212–1257 (AAGT…NTRC). 2 stretches are compositionally biased toward polar residues: residues 1085–1095 (SAQQQRTSSNH) and 1113–1125 (RTGS…SNCV). Low complexity-rich tracts occupy residues 1126-1137 (SPTRSSRPGSPT) and 1145-1166 (TAAT…HQQQ).

The protein belongs to the protein kinase superfamily. TKL Ser/Thr protein kinase family. Interacts with LATS1, and this interaction inhibits phosphorylation of tsr/cofilin. Phosphorylated on serine and/or threonine residues by ROCK1. Phosphorylated by PAK4 resulting in increased LIMK1 ability to phosphorylate cofilin. May be dephosphorylated and inactivated by SSH1. Expressed throughout the imaginal disks of the eye, leg and wing.

Its subcellular location is the cytoplasm. It is found in the cleavage furrow. It localises to the midbody. The enzyme catalyses L-seryl-[protein] + ATP = O-phospho-L-seryl-[protein] + ADP + H(+). It catalyses the reaction L-threonyl-[protein] + ATP = O-phospho-L-threonyl-[protein] + ADP + H(+). Functionally, protein kinase which regulates actin filament dynamics. Phosphorylates and inactivates the actin binding/depolymerizing factor tsr/cofilin, thereby stabilizing the actin cytoskeleton. Modulation of actin cytoskeleton dynamics may be essential for imaginal disk morphogenesis and axon guidance. The polypeptide is LIM domain kinase 1 (LIMK1) (Drosophila melanogaster (Fruit fly)).